Reading from the N-terminus, the 519-residue chain is Golgi-associated kinase 1B (519 aa).

Over 1-37 (MTCPDKPGQLINWFICSLCVPRVRKLWSSRRPRTRRN) the chain is Cytoplasmic. Residues 38-55 (LLLGTACAIYLGFLVSQV) form a helical; Signal-anchor for type II membrane protein membrane-spanning segment. The Extracellular portion of the chain corresponds to 56–519 (GRASLQHGQA…HGVKVLPMNE (464 aa)). The segment at 62-103 (HGQAAEKGPHRSRDTAEPSFPEIPLDGTLAPPESQGNGSTLQ) is disordered. A compositionally biased stretch (basic and acidic residues) spans 68 to 77 (KGPHRSRDTA). N289 carries an N-linked (GlcNAc...) asparagine glycan.

The protein belongs to the GASK family.

The protein resides in the golgi apparatus membrane. This chain is Golgi-associated kinase 1B, found in Homo sapiens (Human).